Here is a 355-residue protein sequence, read N- to C-terminus: U5 small nuclear ribonucleoprotein 40 kDa protein (355 aa).

7 WD repeats span residues 60 to 99 (GHKG…INYS), 103 to 142 (GHKG…LIKR), 145 to 185 (EHSG…STHL), 187 to 226 (QHKY…DPLY), 230 to 269 (SHQD…PPNR), 280 to 319 (NFEK…LQYC), and 322 to 355 (GHSG…EIKP).

Component of the pre-catalytic and catalytic spliceosome complexes. Component of the postcatalytic spliceosome P complex. Part of the U5 snRNP complex. Component of the U4/U6-U5 tri-snRNP complex.

Its subcellular location is the nucleus. Required for pre-mRNA splicing as component of the activated spliceosome. Component of the U5 small nuclear ribonucleoprotein (snRNP) complex and the U4/U6-U5 tri-snRNP complex, building blocks of the spliceosome. The polypeptide is U5 small nuclear ribonucleoprotein 40 kDa protein (snrnp40) (Dictyostelium discoideum (Social amoeba)).